A 463-amino-acid chain; its full sequence is Phosphomethylpyrimidine synthase (463 aa).

Substrate is bound by residues asparagine 80, methionine 109, tyrosine 138, histidine 173, 193–195, 234–237, and glutamate 273; these read SRG and DGLR. A Zn(2+)-binding site is contributed by histidine 277. Tyrosine 300 contributes to the substrate binding site. A Zn(2+)-binding site is contributed by histidine 341. [4Fe-4S] cluster is bound by residues cysteine 421, cysteine 424, and cysteine 429.

Belongs to the ThiC family. As to quaternary structure, homodimer. [4Fe-4S] cluster serves as cofactor.

The catalysed reaction is 5-amino-1-(5-phospho-beta-D-ribosyl)imidazole + S-adenosyl-L-methionine = 4-amino-2-methyl-5-(phosphooxymethyl)pyrimidine + CO + 5'-deoxyadenosine + formate + L-methionine + 3 H(+). It participates in cofactor biosynthesis; thiamine diphosphate biosynthesis. Functionally, catalyzes the synthesis of the hydroxymethylpyrimidine phosphate (HMP-P) moiety of thiamine from aminoimidazole ribotide (AIR) in a radical S-adenosyl-L-methionine (SAM)-dependent reaction. This chain is Phosphomethylpyrimidine synthase, found in Anaeromyxobacter dehalogenans (strain 2CP-1 / ATCC BAA-258).